A 300-amino-acid polypeptide reads, in one-letter code: Porphobilinogen deaminase (300 aa).

Cys239 bears the S-(dipyrrolylmethanemethyl)cysteine mark.

Belongs to the HMBS family. As to quaternary structure, monomer. Requires dipyrromethane as cofactor.

The enzyme catalyses 4 porphobilinogen + H2O = hydroxymethylbilane + 4 NH4(+). Its pathway is porphyrin-containing compound metabolism; protoporphyrin-IX biosynthesis; coproporphyrinogen-III from 5-aminolevulinate: step 2/4. Tetrapolymerization of the monopyrrole PBG into the hydroxymethylbilane pre-uroporphyrinogen in several discrete steps. This chain is Porphobilinogen deaminase, found in Francisella tularensis subsp. holarctica (strain OSU18).